Consider the following 302-residue polypeptide: Vacuolar iron transporter (302 aa).

At 1-70 (MPASGAGYAG…HTNTSSDYVK (70 aa)) the chain is on the cytoplasmic side. A helical transmembrane segment spans residues 71-91 (AVVFGGLDGIVTIFAIVAGCV). The Vacuolar portion of the chain corresponds to 92-99 (GADLSCSQ). The chain crosses the membrane as a helical span at residues 100-120 (VLMVGLGNLLADAISMGFGEY). Over 121-211 (VSAAAEKDFV…IKRGLVMFTA (91 aa)) the chain is Cytoplasmic. Residues E137, E140, E148, E151, M185, and E189 each coordinate Fe cation. Residues 212–232 (FCFFGLLPLAGFIGWVAAFGL) form a helical membrane-spanning segment. Topologically, residues 233-235 (GAE) are vacuolar. Residues 236 to 256 (ADMAFLMACVVSIMTLFILGF) form a helical membrane-spanning segment. Over 257-276 (SKGKFVGQNPTKSACLMAMN) the chain is Cytoplasmic. The helical transmembrane segment at 277–297 (GGCAGTVAYGVGSLLQLVVGA) threads the bilayer. The Vacuolar portion of the chain corresponds to 298-302 (NLTAA).

Belongs to the CCC1 family.

The protein resides in the vacuole membrane. The enzyme catalyses Fe(2+)(in) = Fe(2+)(out). Functionally, vacuolar iron transporter involved in the transfer of iron ions from the cytosol to the vacuole for intracellular iron storage. Plays an essential role in detoxification of excess iron. Important for parasite survival within macrophages and parasite virulence in vivo. The chain is Vacuolar iron transporter from Toxoplasma gondii (strain ATCC 50861 / VEG).